The sequence spans 661 residues: Vasorin (661 aa).

Residues 1 to 19 form the signal peptide; sequence MWHLLVWIILLATAQQMIT. Positions 20–50 constitute an LRRNT domain; it reads EGCPAGCQCNTPQTVFCLARKNSNFPRSVPP. Over 20–563 the chain is Extracellular; sequence EGCPAGCQCN…VTQSQEGNLT (544 aa). LRR repeat units follow at residues 52–72, 75–96, 99–120, 123–144, 147–168, 169–189, 191–212, 215–237, 238–258, and 259–281; these read TLNL…SFIG, GLHL…VFRN, NLSN…TFQG, RLER…AFKG, SLLE…SLPH, LLLL…VFNA, NIES…LLSG, NLHE…HGLT, KLNI…LSNL, and PALQ…LFRS. A glycan (N-linked (GlcNAc...) asparagine) is linked at Asn99. In terms of domain architecture, LRRCT spans 293–346; that stretch reads NPFNCVCSLGWLSEWMRVSGVVLLRPDETRCHFPPKNAGKTLRQLRDSEYGCPA. Residues 348 to 385 are compositionally biased toward low complexity; it reads TTIQMPSTMPPSTTTGPPTTTKHLQTEAPTTASTTTTT. A disordered region spans residues 348–395; the sequence is TTIQMPSTMPPSTTTGPPTTTKHLQTEAPTTASTTTTTIPHQEQEEDT. The region spanning 403-440 is the EGF-like domain; the sequence is EDTLCPPQTCLNGGSCHLDPTGQLECECPPGFQGTYCE. 3 disulfides stabilise this stretch: Cys407–Cys418, Cys412–Cys428, and Cys430–Cys439. Residues 455–543 enclose the Fibronectin type-III domain; it reads EQVKIIEVTV…EEDLCTETHT (89 aa). Asn518 and Asn561 each carry an N-linked (GlcNAc...) asparagine glycan. A helical transmembrane segment spans residues 564–584; sequence LVLVPAVAAGILLSAAVAAAA. Topologically, residues 585 to 661 are cytoplasmic; sequence CYARRRKGKG…PTGRLPHSYF (77 aa). The segment at 591–661 is disordered; sequence KGKGHSVEDG…PTGRLPHSYF (71 aa). The span at 606–623 shows a compositional bias: basic and acidic residues; sequence DGVKKGLDGKGEVKKLSE.

It is found in the membrane. May act as an inhibitor of TGF-beta signaling. The sequence is that of Vasorin (vasn) from Xenopus tropicalis (Western clawed frog).